Reading from the N-terminus, the 293-residue chain is Acetylglutamate kinase (293 aa).

Substrate-binding positions include 65–66 (GG), R87, and N180.

The protein belongs to the acetylglutamate kinase family. ArgB subfamily.

Its subcellular location is the cytoplasm. It carries out the reaction N-acetyl-L-glutamate + ATP = N-acetyl-L-glutamyl 5-phosphate + ADP. The protein operates within amino-acid biosynthesis; L-arginine biosynthesis; N(2)-acetyl-L-ornithine from L-glutamate: step 2/4. Catalyzes the ATP-dependent phosphorylation of N-acetyl-L-glutamate. The chain is Acetylglutamate kinase from Cereibacter sphaeroides (strain ATCC 17029 / ATH 2.4.9) (Rhodobacter sphaeroides).